Reading from the N-terminus, the 473-residue chain is Ribulose bisphosphate carboxylase large chain (473 aa).

An N6,N6,N6-trimethyllysine modification is found at Lys8. Positions 117 and 167 each coordinate substrate. The active-site Proton acceptor is the Lys169. Lys171 contacts substrate. Mg(2+) is bound by residues Lys195, Asp197, and Glu198. Lys195 carries the post-translational modification N6-carboxylysine. The Proton acceptor role is filled by His288. The substrate site is built by Arg289, His321, and Ser373.

The protein belongs to the RuBisCO large chain family. Type I subfamily. As to quaternary structure, heterohexadecamer of 8 large chains and 8 small chains; disulfide-linked. The disulfide link is formed within the large subunit homodimers. Requires Mg(2+) as cofactor. In terms of processing, the disulfide bond which can form in the large chain dimeric partners within the hexadecamer appears to be associated with oxidative stress and protein turnover.

It localises to the plastid. It is found in the chloroplast. It carries out the reaction 2 (2R)-3-phosphoglycerate + 2 H(+) = D-ribulose 1,5-bisphosphate + CO2 + H2O. The enzyme catalyses D-ribulose 1,5-bisphosphate + O2 = 2-phosphoglycolate + (2R)-3-phosphoglycerate + 2 H(+). Functionally, ruBisCO catalyzes two reactions: the carboxylation of D-ribulose 1,5-bisphosphate, the primary event in carbon dioxide fixation, as well as the oxidative fragmentation of the pentose substrate in the photorespiration process. Both reactions occur simultaneously and in competition at the same active site. The polypeptide is Ribulose bisphosphate carboxylase large chain (Amorphophallus titanum (Titan arum)).